A 426-amino-acid polypeptide reads, in one-letter code: Glutamate-1-semialdehyde 2,1-aminomutase (426 aa).

Lys265 bears the N6-(pyridoxal phosphate)lysine mark.

Belongs to the class-III pyridoxal-phosphate-dependent aminotransferase family. HemL subfamily. Homodimer. It depends on pyridoxal 5'-phosphate as a cofactor.

It localises to the cytoplasm. It carries out the reaction (S)-4-amino-5-oxopentanoate = 5-aminolevulinate. Its pathway is porphyrin-containing compound metabolism; protoporphyrin-IX biosynthesis; 5-aminolevulinate from L-glutamyl-tRNA(Glu): step 2/2. This chain is Glutamate-1-semialdehyde 2,1-aminomutase, found in Erwinia tasmaniensis (strain DSM 17950 / CFBP 7177 / CIP 109463 / NCPPB 4357 / Et1/99).